We begin with the raw amino-acid sequence, 508 residues long: Glutamate--cysteine ligase, chloroplastic (508 aa).

The transit peptide at 1–59 (MTTIFRLASSSSPSLRHDATPHNFHIRKTSISNTFSFSSKNSLSFKRILTSGGSRRFIV) directs the protein to the chloroplast. 2 disulfide bridges follow: Cys172-Cys392 and Cys335-Cys350.

The protein belongs to the carboxylate-amine ligase family. Glutamate--cysteine ligase type 2 subfamily. As to quaternary structure, homodimer or monomer when oxidized or reduced, respectively. The Cys-172-Cys-392 disulfide bridge is known to modulate the enzyme activity according to the redox status. The oxidized form constitutes the active enzyme.

It is found in the plastid. The protein resides in the chloroplast. The enzyme catalyses L-cysteine + L-glutamate + ATP = gamma-L-glutamyl-L-cysteine + ADP + phosphate + H(+). Its pathway is sulfur metabolism; glutathione biosynthesis; glutathione from L-cysteine and L-glutamate: step 1/2. The sequence is that of Glutamate--cysteine ligase, chloroplastic (GSH1) from Medicago truncatula (Barrel medic).